The primary structure comprises 157 residues: ATP synthase subunit delta (157 aa).

This sequence belongs to the ATPase delta chain family. In terms of assembly, F-type ATPases have 2 components, F(1) - the catalytic core - and F(0) - the membrane proton channel. F(1) has five subunits: alpha(3), beta(3), gamma(1), delta(1), epsilon(1). F(0) has three main subunits: a(1), b(2) and c(10-14). The alpha and beta chains form an alternating ring which encloses part of the gamma chain. F(1) is attached to F(0) by a central stalk formed by the gamma and epsilon chains, while a peripheral stalk is formed by the delta and b chains.

The protein resides in the cell membrane. In terms of biological role, f(1)F(0) ATP synthase produces ATP from ADP in the presence of a proton or sodium gradient. F-type ATPases consist of two structural domains, F(1) containing the extramembraneous catalytic core and F(0) containing the membrane proton channel, linked together by a central stalk and a peripheral stalk. During catalysis, ATP synthesis in the catalytic domain of F(1) is coupled via a rotary mechanism of the central stalk subunits to proton translocation. Functionally, this protein is part of the stalk that links CF(0) to CF(1). It either transmits conformational changes from CF(0) to CF(1) or is implicated in proton conduction. The chain is ATP synthase subunit delta from Chloroflexus aggregans (strain MD-66 / DSM 9485).